The sequence spans 410 residues: Metal tolerance protein 3 (410 aa).

Residues 1 to 58 form a disordered region; it reads MDGDDRRTPLLGGEGGSTRPPSLRRRDSARSLRSTFLSRLPDKVRGGGDPERPAADVD. Topologically, residues 1–114 are cytoplasmic; sequence MDGDDRRTPL…EDKEQKQSES (114 aa). A compositionally biased stretch (basic and acidic residues) spans 40–58; the sequence is LPDKVRGGGDPERPAADVD. Residues 115–135 form a helical membrane-spanning segment; sequence AMKISNYANIILLVFKVYATI. At 136–140 the chain is on the vacuolar side; it reads KTGSM. The chain crosses the membrane as a helical span at residues 141–161; that stretch reads AIAASTLDSLLDFLAGGILYF. At 162-184 the chain is on the cytoplasmic side; the sequence is THLTMKSVNIYKYPIGKLRVQPV. Residues 185 to 205 traverse the membrane as a helical segment; it reads GIIVFAAIMATLGFQVLIQAI. The Vacuolar segment spans residues 206–221; that stretch reads EQLVENKAGEKMTPEQ. The helical transmembrane segment at 222 to 242 threads the bilayer; it reads LIWLYSIMLSATVVKLALYIY. Over 243–258 the chain is Cytoplasmic; it reads CRSSGNSIVQAYAKDH. The chain crosses the membrane as a helical span at residues 259-275; the sequence is YFDVVTNVVGLVAAVLG. At 276–284 the chain is on the vacuolar side; it reads DKFFWWIDP. A helical membrane pass occupies residues 285–303; sequence VGAVLLAVYTIVNWSGTVY. Residues 304-410 are Cytoplasmic-facing; that stretch reads ENAVTLVGQC…VRSRLPSTEP (107 aa).

The protein belongs to the cation diffusion facilitator (CDF) transporter (TC 2.A.4) family. SLC30A subfamily.

The protein resides in the vacuole membrane. In terms of biological role, involved in sequestration of excess metal in the cytoplasm into vacuoles to maintain metal homeostasis. The polypeptide is Metal tolerance protein 3 (MTP3) (Oryza sativa subsp. japonica (Rice)).